The primary structure comprises 383 residues: UDP-N-acetylglucosamine 2-epimerase (383 aa).

The protein belongs to the UDP-N-acetylglucosamine 2-epimerase family.

It catalyses the reaction UDP-N-acetyl-alpha-D-glucosamine = UDP-N-acetyl-alpha-D-mannosamine. Its pathway is capsule biogenesis; capsule polysaccharide biosynthesis. Its function is as follows. Non-hydrolyzing C2-epimerase involved in the biosynthesis of capsular polysaccharides. Catalyzes the C2 epimerization of UDP-N-acetylglucosamine (UDP-GlcNAc) to form UDP-N-acetylmannosamine (UDP-ManNAc). The chain is UDP-N-acetylglucosamine 2-epimerase from Campylobacter jejuni.